The sequence spans 179 residues: Large ribosomal subunit protein uL6 (179 aa).

This sequence belongs to the universal ribosomal protein uL6 family. Part of the 50S ribosomal subunit.

Functionally, this protein binds to the 23S rRNA, and is important in its secondary structure. It is located near the subunit interface in the base of the L7/L12 stalk, and near the tRNA binding site of the peptidyltransferase center. This Geotalea uraniireducens (strain Rf4) (Geobacter uraniireducens) protein is Large ribosomal subunit protein uL6.